The chain runs to 484 residues: tRNA sulfurtransferase (484 aa).

The THUMP domain maps to 63 to 167; that stretch reads QGIRDRLSCM…DQRLFVVHDQ (105 aa). Residues 185 to 186, Lys267, Gly289, and Gln298 contribute to the ATP site; that span reads LM. Cys346 and Cys457 are oxidised to a cystine. Residues 405-483 form the Rhodanese domain; that stretch reads ALAGQVIIDI…GHANVRVYRP (79 aa). Residue Cys457 is the Cysteine persulfide intermediate of the active site.

This sequence belongs to the ThiI family.

It localises to the cytoplasm. The catalysed reaction is [ThiI sulfur-carrier protein]-S-sulfanyl-L-cysteine + a uridine in tRNA + 2 reduced [2Fe-2S]-[ferredoxin] + ATP + H(+) = [ThiI sulfur-carrier protein]-L-cysteine + a 4-thiouridine in tRNA + 2 oxidized [2Fe-2S]-[ferredoxin] + AMP + diphosphate. It catalyses the reaction [ThiS sulfur-carrier protein]-C-terminal Gly-Gly-AMP + S-sulfanyl-L-cysteinyl-[cysteine desulfurase] + AH2 = [ThiS sulfur-carrier protein]-C-terminal-Gly-aminoethanethioate + L-cysteinyl-[cysteine desulfurase] + A + AMP + 2 H(+). Its pathway is cofactor biosynthesis; thiamine diphosphate biosynthesis. Its function is as follows. Catalyzes the ATP-dependent transfer of a sulfur to tRNA to produce 4-thiouridine in position 8 of tRNAs, which functions as a near-UV photosensor. Also catalyzes the transfer of sulfur to the sulfur carrier protein ThiS, forming ThiS-thiocarboxylate. This is a step in the synthesis of thiazole, in the thiamine biosynthesis pathway. The sulfur is donated as persulfide by IscS. This is tRNA sulfurtransferase from Pseudomonas syringae pv. tomato (strain ATCC BAA-871 / DC3000).